Consider the following 252-residue polypeptide: 2-succinyl-6-hydroxy-2,4-cyclohexadiene-1-carboxylate synthase (252 aa).

The protein belongs to the AB hydrolase superfamily. MenH family. In terms of assembly, monomer.

The catalysed reaction is 5-enolpyruvoyl-6-hydroxy-2-succinyl-cyclohex-3-ene-1-carboxylate = (1R,6R)-6-hydroxy-2-succinyl-cyclohexa-2,4-diene-1-carboxylate + pyruvate. It functions in the pathway quinol/quinone metabolism; 1,4-dihydroxy-2-naphthoate biosynthesis; 1,4-dihydroxy-2-naphthoate from chorismate: step 3/7. Its pathway is quinol/quinone metabolism; menaquinone biosynthesis. In terms of biological role, catalyzes a proton abstraction reaction that results in 2,5-elimination of pyruvate from 2-succinyl-5-enolpyruvyl-6-hydroxy-3-cyclohexene-1-carboxylate (SEPHCHC) and the formation of 2-succinyl-6-hydroxy-2,4-cyclohexadiene-1-carboxylate (SHCHC). The sequence is that of 2-succinyl-6-hydroxy-2,4-cyclohexadiene-1-carboxylate synthase from Escherichia coli (strain UTI89 / UPEC).